The following is a 275-amino-acid chain: uncharacterized protein (275 aa).

Residues Lys-171 to Ile-268 form the HTH araC/xylS-type domain. DNA-binding regions (H-T-H motif) lie at residues Asn-188–Lys-209 and Pro-235–Val-258.

This is an uncharacterized protein from Bacillus subtilis (strain 168).